A 339-amino-acid chain; its full sequence is mRNA cap guanine-N(7) methyltransferase 2 (339 aa).

Positions 1 to 277 constitute an mRNA cap 0 methyltransferase domain; it reads MAVTPHHRLY…LYSTFVFQKP (277 aa). Residues Lys-14, Asp-54, and 82-83 each bind S-adenosyl-L-methionine; that span reads DP. The disordered stretch occupies residues 314 to 339; the sequence is VSRTDILPPADNEKGILGPGPADMRL.

This sequence belongs to the class I-like SAM-binding methyltransferase superfamily. mRNA cap 0 methyltransferase family.

It localises to the nucleus. The enzyme catalyses a 5'-end (5'-triphosphoguanosine)-ribonucleoside in mRNA + S-adenosyl-L-methionine = a 5'-end (N(7)-methyl 5'-triphosphoguanosine)-ribonucleoside in mRNA + S-adenosyl-L-homocysteine. Functionally, mRNA-capping methyltransferase that methylates the N7 position of the added guanosine to the 5'-cap structure of mRNAs. Binds RNA containing 5'-terminal GpppC. This Oryza sativa subsp. japonica (Rice) protein is mRNA cap guanine-N(7) methyltransferase 2.